The primary structure comprises 376 residues: Chaperone protein DnaJ (376 aa).

The 66-residue stretch at 5–70 folds into the J domain; that stretch reads DFYDVLGVSK…EKKQNYDNFG (66 aa). A CR-type zinc finger spans residues 137–215; the sequence is GKKQDIKFST…CNGQGNKQAS (79 aa). Residues C150, C153, C167, C170, C189, C192, C203, and C206 each coordinate Zn(2+). 4 CXXCXGXG motif repeats span residues 150 to 157, 167 to 174, 189 to 196, and 203 to 210; these read CNTCNGNG, CTVCGGNG, CPQCAGSG, and CTDCNGQG.

The protein belongs to the DnaJ family. In terms of assembly, homodimer. Zn(2+) is required as a cofactor.

Its subcellular location is the cytoplasm. Functionally, participates actively in the response to hyperosmotic and heat shock by preventing the aggregation of stress-denatured proteins and by disaggregating proteins, also in an autonomous, DnaK-independent fashion. Unfolded proteins bind initially to DnaJ; upon interaction with the DnaJ-bound protein, DnaK hydrolyzes its bound ATP, resulting in the formation of a stable complex. GrpE releases ADP from DnaK; ATP binding to DnaK triggers the release of the substrate protein, thus completing the reaction cycle. Several rounds of ATP-dependent interactions between DnaJ, DnaK and GrpE are required for fully efficient folding. Also involved, together with DnaK and GrpE, in the DNA replication of plasmids through activation of initiation proteins. The sequence is that of Chaperone protein DnaJ from Pelagibacter ubique (strain HTCC1062).